Reading from the N-terminus, the 522-residue chain is Bifunctional purine biosynthesis protein PurH (522 aa).

The MGS-like domain occupies 1–143 (MIRRALISVS…KNHARVAVVV (143 aa)).

Belongs to the PurH family.

The catalysed reaction is (6R)-10-formyltetrahydrofolate + 5-amino-1-(5-phospho-beta-D-ribosyl)imidazole-4-carboxamide = 5-formamido-1-(5-phospho-D-ribosyl)imidazole-4-carboxamide + (6S)-5,6,7,8-tetrahydrofolate. The enzyme catalyses IMP + H2O = 5-formamido-1-(5-phospho-D-ribosyl)imidazole-4-carboxamide. The protein operates within purine metabolism; IMP biosynthesis via de novo pathway; 5-formamido-1-(5-phospho-D-ribosyl)imidazole-4-carboxamide from 5-amino-1-(5-phospho-D-ribosyl)imidazole-4-carboxamide (10-formyl THF route): step 1/1. It participates in purine metabolism; IMP biosynthesis via de novo pathway; IMP from 5-formamido-1-(5-phospho-D-ribosyl)imidazole-4-carboxamide: step 1/1. This Sorangium cellulosum (strain So ce56) (Polyangium cellulosum (strain So ce56)) protein is Bifunctional purine biosynthesis protein PurH.